A 376-amino-acid polypeptide reads, in one-letter code: MTQRFSFELTATDGRARTGVISTPRGEIRTPAFMPVGTAGTVKAMLPENVRATGADILLGNTYHLMLRPTAERVARLGGLHRFMNWDRPILTDSGGFQVMSLADLRKLSEEGVTFRSHIDGSKHHLSPERSMEIQRLLGSDIVMAFDECPALPATEEAVAQSMRLSMRWARRSREAFGDRPGHALFGIMQGGVTRDLREESAAALREIGFEGYAIGGLAVGEGQEAMFGVLDYAPGFLPEDRPRYLMGVGKPDDIVGAVERGVDMMDCVLPSRSGRTGQAWTRRGQVNIKNARHMDDPRPLDEACSCPACRSYSRAYLHHVFRAQEIIASMLLTWHNLHYYQELMQGLRTAIAAGRLGEFVAAFHAARAEGDIEPL.

Asp-93 acts as the Proton acceptor in catalysis. Residues Asp-93 to Phe-97, Asp-147, Gln-190, and Gly-217 contribute to the substrate site. Residues Gly-248 to Asp-254 are RNA binding. Residue Asp-267 is the Nucleophile of the active site. 4 residues coordinate Zn(2+): Cys-305, Cys-307, Cys-310, and His-336.

Belongs to the queuine tRNA-ribosyltransferase family. In terms of assembly, homodimer. Within each dimer, one monomer is responsible for RNA recognition and catalysis, while the other monomer binds to the replacement base PreQ1. Zn(2+) serves as cofactor.

It carries out the reaction 7-aminomethyl-7-carbaguanine + guanosine(34) in tRNA = 7-aminomethyl-7-carbaguanosine(34) in tRNA + guanine. It participates in tRNA modification; tRNA-queuosine biosynthesis. Catalyzes the base-exchange of a guanine (G) residue with the queuine precursor 7-aminomethyl-7-deazaguanine (PreQ1) at position 34 (anticodon wobble position) in tRNAs with GU(N) anticodons (tRNA-Asp, -Asn, -His and -Tyr). Catalysis occurs through a double-displacement mechanism. The nucleophile active site attacks the C1' of nucleotide 34 to detach the guanine base from the RNA, forming a covalent enzyme-RNA intermediate. The proton acceptor active site deprotonates the incoming PreQ1, allowing a nucleophilic attack on the C1' of the ribose to form the product. After dissociation, two additional enzymatic reactions on the tRNA convert PreQ1 to queuine (Q), resulting in the hypermodified nucleoside queuosine (7-(((4,5-cis-dihydroxy-2-cyclopenten-1-yl)amino)methyl)-7-deazaguanosine). The polypeptide is Queuine tRNA-ribosyltransferase (Cereibacter sphaeroides (strain ATCC 17029 / ATH 2.4.9) (Rhodobacter sphaeroides)).